We begin with the raw amino-acid sequence, 587 residues long: A-type ATP synthase subunit A (587 aa).

234–241 (GPFGSGKT) serves as a coordination point for ATP.

The protein belongs to the ATPase alpha/beta chains family. The N-terminus (approximately residues 106-122) interacts with subunit H. Has multiple subunits with at least A(3), B(3), C, D, E(1 or 2), F, H(2), I and proteolipid K(x).

It is found in the cell membrane. It carries out the reaction ATP + H2O + 4 H(+)(in) = ADP + phosphate + 5 H(+)(out). Its activity is regulated as follows. ATP hydrolysis is inhibited by N',N'-dicyclohexylcarbodiimide. Its function is as follows. Component of the A-type ATP synthase that produces ATP from ADP in the presence of a proton gradient across the membrane. The A chain is the catalytic subunit. Hydrolyzes ATP, GTP (86% of ATPase rate) and UTP (54% of ATPase rate), has very poor activity on CTP. The protein is A-type ATP synthase subunit A of Methanocaldococcus jannaschii (strain ATCC 43067 / DSM 2661 / JAL-1 / JCM 10045 / NBRC 100440) (Methanococcus jannaschii).